Reading from the N-terminus, the 140-residue chain is Large ribosomal subunit protein bL19 (140 aa).

Basic and acidic residues predominate over residues 113–126; it reads RIAERQDRTADGKI. Positions 113 to 140 are disordered; it reads RIAERQDRTADGKIKKGGKSAPAPTAAE.

This sequence belongs to the bacterial ribosomal protein bL19 family.

This protein is located at the 30S-50S ribosomal subunit interface and may play a role in the structure and function of the aminoacyl-tRNA binding site. The chain is Large ribosomal subunit protein bL19 from Xanthobacter autotrophicus (strain ATCC BAA-1158 / Py2).